The following is an 862-amino-acid chain: DNA topoisomerase 3-beta-1 (862 aa).

The Toprim domain maps to 3–153 (TVLMVAEKPS…EKTVFRARFS (151 aa)). Positions 171–593 (DHNEALSVDA…HTLDVFKRKF (423 aa)) constitute a Topo IA-type catalytic domain. Catalysis depends on Tyr336, which acts as the O-(5'-phospho-DNA)-tyrosine intermediate. Residues 821 to 851 (PMHRGGPGRRQGRGRGRARRPPGKPNPRRPK) are compositionally biased toward basic residues. The tract at residues 821 to 854 (PMHRGGPGRRQGRGRGRARRPPGKPNPRRPKDKM) is disordered.

Belongs to the type IA topoisomerase family. In terms of tissue distribution, isoform 1 is found in testis, heart and skeletal muscle. A 4 kb transcript which probably represents isoform 2 is found in thymus, kidney and pancreas.

It catalyses the reaction ATP-independent breakage of single-stranded DNA, followed by passage and rejoining.. Functionally, releases the supercoiling and torsional tension of DNA introduced during the DNA replication and transcription by transiently cleaving and rejoining one strand of the DNA duplex. Introduces a single-strand break via transesterification at a target site in duplex DNA. The scissile phosphodiester is attacked by the catalytic tyrosine of the enzyme, resulting in the formation of a DNA-(5'-phosphotyrosyl)-enzyme intermediate and the expulsion of a 3'-OH DNA strand. The free DNA strand than undergoes passage around the unbroken strand thus removing DNA supercoils. Finally, in the religation step, the DNA 3'-OH attacks the covalent intermediate to expel the active-site tyrosine and restore the DNA phosphodiester backbone. Possesses negatively supercoiled DNA relaxing activity. The protein is DNA topoisomerase 3-beta-1 (TOP3B) of Homo sapiens (Human).